Consider the following 188-residue polypeptide: MSKLEAILSQEVEAEIQALLQEAEAKAEAVKREAEEKAKALLQARERALEAQYRAALRRAESAGELLVATARTQARGEVLEEVRRRVREALEALPQKPEWPEVVRKLALEALEALPGAKALVANPEDLPHLEALARERGVELQAEPALRLGVRAVGAEGKTQVENSLLARLDRAWDALSSKVAQALWG.

Belongs to the V-ATPase E subunit family.

Its function is as follows. Produces ATP from ADP in the presence of a proton gradient across the membrane. The polypeptide is V-type ATP synthase subunit E (atpE) (Thermus thermophilus (strain ATCC 27634 / DSM 579 / HB8)).